The primary structure comprises 902 residues: 4-hydroxyphenylacetate decarboxylase glycyl radical subunit (902 aa).

Residues 38-774 (KRAEDLLDVY…ATLATPDGRL (737 aa)) form the PFL domain. The 4-hydroxyphenylacetate site is built by S348 and C507. The Cysteine radical intermediate role is filled by C507. E509 (proton donor) is an active-site residue. 4-hydroxyphenylacetate-binding residues include H540 and E641. In terms of domain architecture, Glycine radical spans 782 to 902 (GSVSAYAGTD…VIARTEYEGV (121 aa)). Glycine radical is present on G877.

Belongs to the glycyl radical enzyme (GRE) family. HPAD subfamily. Heterooctamer consisting of 4 large (HpdB) subunits and 4 small (HpdC) subunits, arranged as a tetramer of heterodimers. Also forms a catalytically inactive homodimer. In terms of processing, requires the activating protein CsdA to generate the key active site glycyl radical that is involved in catalysis. Post-translationally, phosphorylated on serine. Phosphorylation may trigger the formation of the active heterooctamers and thereby regulates enzyme activity.

The catalysed reaction is 4-hydroxyphenylacetate + H(+) = 4-methylphenol + CO2. The enzyme catalyses 3,4-dihydroxyphenylacetate + H(+) = 4-methylcatechol + CO2. Functionally, glycyl radical subunit of the HPA decarboxylase that decarboxylates phenylacetates with a hydroxyl group in the p-position. Active toward 4-hydroxyphenylacetate and 3,4-dihydroxyphenylacetate, forming 4-methylphenol and 4-methylcatechol, respectively. Is likely involved in the catabolism of aromatic amino acids such as tyrosine fermentation. 4-methylphenol (p-cresol) formation provides metabolic toxicity, which allows an active suppression of other microbes and may provide growth advantages for the producers in highly competitive environments. The large subunit is the catalytic subunit that binds the substrate. This chain is 4-hydroxyphenylacetate decarboxylase glycyl radical subunit, found in Clostridioides difficile (strain CD196) (Peptoclostridium difficile).